A 684-amino-acid chain; its full sequence is Putative glucan endo-1,3-beta-glucosidase btgC (684 aa).

Residues 1 to 10 (MAGVNRSFSY) are compositionally biased toward polar residues. Disordered regions lie at residues 1-38 (MAGV…LYST), 124-143 (AERD…APPD), and 157-182 (DSYS…TTPS). Topologically, residues 1-302 (MAGVNRSFSY…HIIGGGSRKR (302 aa)) are cytoplasmic. The segment covering 12–32 (RGDDALLRDDEREISPLRSAE) has biased composition (basic and acidic residues). The helical; Signal-anchor for type II membrane protein transmembrane segment at 303 to 323 (GWIVGLILAAVIVAAIVGGAV) threads the bilayer. The Extracellular segment spans residues 324 to 684 (GGILGHQEHD…IPDCGGKTIT (361 aa)). The interval 330–358 (QEHDGDTSSSSSSSSSSGTGSGGSDKGDG) is disordered. Residues 336-347 (TSSSSSSSSSSG) show a composition bias toward low complexity. Residues N404, N427, N455, and N474 are each glycosylated (N-linked (GlcNAc...) asparagine). E487 (proton donor) is an active-site residue. The active-site Nucleophile is the E586. N631 is a glycosylation site (N-linked (GlcNAc...) asparagine).

It belongs to the glycosyl hydrolase 17 family.

The protein localises to the cell membrane. The enzyme catalyses Hydrolysis of (1-&gt;3)-beta-D-glucosidic linkages in (1-&gt;3)-beta-D-glucans.. Glucanases play a role in cell expansion during growth, in cell-cell fusion during mating, and in spore release during sporulation. This enzyme may be involved in beta-glucan degradation. Active on laminarin and lichenan. In Aspergillus niger (strain ATCC MYA-4892 / CBS 513.88 / FGSC A1513), this protein is Putative glucan endo-1,3-beta-glucosidase btgC (btgC).